The following is a 51-amino-acid chain: ATP synthase F(1) complex subunit epsilon, mitochondrial (51 aa).

Lysine 21, lysine 32, and lysine 37 each carry N6-acetyllysine; alternate. N6-succinyllysine; alternate occurs at positions 21, 32, and 37. Lysine 44 bears the N6-acetyllysine mark.

The protein belongs to the eukaryotic ATPase epsilon family. Component of the ATP synthase complex composed at least of ATP5F1A/subunit alpha, ATP5F1B/subunit beta, ATP5MC1/subunit c (homooctomer), MT-ATP6/subunit a, MT-ATP8/subunit 8, ATP5ME/subunit e, ATP5MF/subunit f, ATP5MG/subunit g, ATP5MK/subunit k, ATP5MJ/subunit j, ATP5F1C/subunit gamma, ATP5F1D/subunit delta, ATP5F1E/subunit epsilon, ATP5PF/subunit F6, ATP5PB/subunit b, ATP5PD/subunit d, ATP5PO/subunit OSCP. ATP synthase complex consists of a soluble F(1) head domain (subunits alpha(3) and beta(3)) - the catalytic core - and a membrane F(0) domain - the membrane proton channel (subunits c, a, 8, e, f, g, k and j). These two domains are linked by a central stalk (subunits gamma, delta, and epsilon) rotating inside the F1 region and a stationary peripheral stalk (subunits F6, b, d, and OSCP). As to expression, ubiquitous.

It is found in the mitochondrion. The protein resides in the mitochondrion inner membrane. Subunit epsilon, of the mitochondrial membrane ATP synthase complex (F(1)F(0) ATP synthase or Complex V) that produces ATP from ADP in the presence of a proton gradient across the membrane which is generated by electron transport complexes of the respiratory chain. ATP synthase complex consist of a soluble F(1) head domain - the catalytic core - and a membrane F(1) domain - the membrane proton channel. These two domains are linked by a central stalk rotating inside the F(1) region and a stationary peripheral stalk. During catalysis, ATP synthesis in the catalytic domain of F(1) is coupled via a rotary mechanism of the central stalk subunits to proton translocation. In vivo, can only synthesize ATP although its ATP hydrolase activity can be activated artificially in vitro. May be essential for the assembly of F(1) and may play an important role in the incorporation of the hydrophobic subunit c into the F(1)-c oligomer rotor of the mitochondrial ATP synthase complex. The sequence is that of ATP synthase F(1) complex subunit epsilon, mitochondrial from Homo sapiens (Human).